A 1180-amino-acid chain; its full sequence is DNA-directed RNA polymerase subunit beta (1180 aa).

Residues 1154 to 1164 show a composition bias toward acidic residues; it reads EMKELDDEDEQ. The tract at residues 1154–1180 is disordered; it reads EMKELDDEDEQASDKLNLNIDSTESNV. The span at 1167 to 1180 shows a compositional bias: polar residues; the sequence is DKLNLNIDSTESNV.

This sequence belongs to the RNA polymerase beta chain family. As to quaternary structure, the RNAP catalytic core consists of 2 alpha, 1 beta, 1 beta' and 1 omega subunit. When a sigma factor is associated with the core the holoenzyme is formed, which can initiate transcription.

The enzyme catalyses RNA(n) + a ribonucleoside 5'-triphosphate = RNA(n+1) + diphosphate. Its function is as follows. DNA-dependent RNA polymerase catalyzes the transcription of DNA into RNA using the four ribonucleoside triphosphates as substrates. The polypeptide is DNA-directed RNA polymerase subunit beta (Halalkalibacterium halodurans (strain ATCC BAA-125 / DSM 18197 / FERM 7344 / JCM 9153 / C-125) (Bacillus halodurans)).